The following is a 555-amino-acid chain: Wee1-like protein kinase 2-A (555 aa).

Disordered stretches follow at residues Met1–Ala81 and Phe149–Thr175. Residues Ser38–Cys48 are compositionally biased toward polar residues. Positions Ser68 to Ser78 are enriched in low complexity. The span at Phe149–Gln160 shows a compositional bias: polar residues. The Protein kinase domain maps to Phe210 to Leu480. ATP is bound by residues Ile216–Val224 and Lys239. The active-site Proton acceptor is Asp337. The Mg(2+) site is built by Asn342 and Asp374. Residues Ala487–Leu513 are a coiled coil. At Ser549 the chain carries Phosphoserine.

Belongs to the protein kinase superfamily. Ser/Thr protein kinase family. WEE1 subfamily. As to quaternary structure, interacts with prmt5; this promotes protesomal degradation of wee2-a in the nucleus. The interaction with prmt5 is disrupted upon activation of the DNA replication checkpoint. Subject to proteasomal degradation in the nucleus. As to expression, detected in egg (at protein level). Oocyte-specific maternally supplied protein. Present in immature and mature oocytes and in early (pregastrula) embryos, but not in post-gastrula embryos.

It localises to the nucleus. The protein resides in the cytoplasm. The protein localises to the cytosol. It carries out the reaction L-tyrosyl-[protein] + ATP = O-phospho-L-tyrosyl-[protein] + ADP + H(+). Its function is as follows. Oocyte-specific protein tyrosine kinase that phosphorylates and inhibits cdk1 and acts as a key regulator of meiosis. Required to maintain meiotic arrest in oocytes by phosphorylating cdk1 at 'Tyr-15', which inhibits cdk1 activity and prevents meiotic reentry. Negative regulator of mitosis. Involved in the mitotic DNA replication checkpoint. The polypeptide is Wee1-like protein kinase 2-A (wee2-a) (Xenopus laevis (African clawed frog)).